The chain runs to 948 residues: MADSDDEYDRKRRDKFRGERSDSYRTERRDDRRPLGGSGSARDEWSDRNPFRGGASAGGGGGGARHRPDYSDYRGPGPRARYGSPGRDLPPAKRMRPDWGDGDVRPNPRFGGYDPYLMQAWNDHYQSIHSAYSHGSHMPPVRESGGSGGDSLTQPAMLNLKQFLDTQDENISDSEVMRKYTEYKTDFKRQQLNEFFVAHKDEEWFKNKYHPEDSVRRAEEQRGFLKRRTDVFVELLENGTIGSVKVDSVQGDALIRVLDTCVIKLEGGTDEDLKALDEKPKETPVYERKHDPAPVKAVDEVKSPKKETEKEASPVIVSPQRKSVKPLNSDDENWDEEVAAPPKKDVEEEPKALESGSEDKSRRKKSAKRKRVNSGDDSSSESDSSSSSDDEDEEKLKKKYDVEDGLRSEQKAEAEKDKEMQDAKVIEAPESPKEATENSAEEVKASDAAETPAEEAEQEKPEVAEEVNRPKQDQENGDKITTEDGETKSDSEENKVMETETIDLDKVRDGQPRALHRTSSIFLRNLAPSITKAEIEAVCTRFSGYLRVAIADPLVERRWYRRGWITFTRDVNIKEICWSLNNQRLRDCEMGAIVNRDLSRRVRPANGITAHKQVVRSDIKLCAKIILNLDERFRLWPEPTSDDSIPFDRAGESSANGNTSTYGIKSKNPVLQNITDYLIEEASAEEEELLGLTGENKDAEGEPIERDEHLLAVLDRLVLYLRIVHSVDYYNHCEYPYEDEMPNRCGIIHARGPAPSRVTSNDIHEYVKTYESKLQQFLTKTALLSDEETKDLGAKDAETEVEKFVQANTQELAKDKWLCPLSGKKFKGPEFIRKHIFNKHEEKVDEVRKEVQYFNNYLRDPKRPQLPEHPGSSKRPESESGRGGGSGYRPPMYPPFSGMPYGFSPSMMGGGRGGRNFPPVRRELPLEHQRRLIGYHDLDAPANSDMFD.

Disordered regions lie at residues methionine 1 to proline 106 and lysine 274 to methionine 497. Basic and acidic residues-rich tracts occupy residues tyrosine 8–proline 34 and alanine 41–proline 50. Tyrosine 82 carries the phosphotyrosine modification. A Phosphoserine modification is found at serine 84. Basic and acidic residues-rich tracts occupy residues methionine 95–proline 106 and lysine 274–alanine 312. The residue at position 329 (serine 329) is a Phosphoserine. Acidic residues predominate over residues serine 329–valine 338. A compositionally biased stretch (basic and acidic residues) spans proline 342–serine 361. Residues arginine 362–valine 372 are compositionally biased toward basic residues. Basic and acidic residues-rich tracts occupy residues glutamate 394–aspartate 447 and glutamine 458–methionine 497. Phosphoserine is present on serine 431. Position 644 is a phosphoserine (serine 644). Residues asparagine 856–tyrosine 893 form a disordered region.

The protein belongs to the ARS2 family. Interacts with cbp20, Dcr-2 and pasha.

Its subcellular location is the nucleus. Functionally, acts as a mediator between the cap-binding complex (CBC) and RNA-mediated gene silencing (RNAi). Involved in innate immunity via the short interfering RNAs (siRNAs) processing machinery by restricting the viral RNA production. Also involved microRNA (miRNA)-mediated silencing by contributing to the stability and delivery of primary miRNA transcripts to the primary miRNA processing complex containing drosha and pasha. This is Serrate RNA effector molecule homolog (Ars2) from Drosophila ananassae (Fruit fly).